The following is a 2181-amino-acid chain: Non-reducing polyketide synthase subA (2181 aa).

The N-terminal acylcarrier protein transacylase domain (SAT) stretch occupies residues 74–180 (QWVKGNSTQP…LALCCGAYID (107 aa)). The region spanning 347–779 (QAQLLVLGPV…GTNAAMLVCQ (433 aa)) is the Ketosynthase family 3 (KS3) domain. Residues Cys525, His661, and His702 each act as for beta-ketoacyl synthase activity in the active site. Residues 891–1193 (VLAGQTGRRV…SFYPAALGEP (303 aa)) are malonyl-CoA:ACP transacylase (MAT) domain. Residue Ser977 is the For acyl/malonyl transferase activity of the active site. The tract at residues 1269–1401 (VSLIGKTQNA…GVITLQEVYS (133 aa)) is N-terminal hotdog fold. Residues 1269-1579 (VSLIGKTQNA…FQKIAISSLK (311 aa)) enclose the PKS/mFAS DH domain. A product template (PT) domain region spans residues 1276–1573 (QNAGVQTVEY…TILGAKFQKI (298 aa)). The C-terminal hotdog fold stretch occupies residues 1425 to 1579 (SASVVQGDFI…FQKIAISSLK (155 aa)). Residues 1652 to 1673 (ISGSSRSTSSSPPSLESRSQAM) form a disordered region. Positions 1653–1670 (SGSSRSTSSSPPSLESRS) are enriched in low complexity. In terms of domain architecture, Carrier spans 1677–1753 (EITEGAGSAL…TLFHTIFPQQ (77 aa)). Ser1713 is modified (O-(pantetheine 4'-phosphoryl)serine). The segment at 1982 to 2164 (EFMNCLFSYN…QSGFGHVDWT (183 aa)) is methyltransferase (CMeT) domain.

It participates in secondary metabolite biosynthesis; terpenoid biosynthesis. Functionally, non-reducing polyketide synthase; part of the gene cluster that mediates the biosynthesis of the immunosuppressants subglutinols, meroterpenoids consisting of an alpha-pyrone (4-hydroxy-5,6-dimethyl-2-pyrone) moiety attached to a decalin core fused to a five-membered cyclic ether carrying a prenylside chain. The first step of the pathway is the synthesis of the alpha-pyrone moiety by the polyketide synthase subA via condensation of one acetyl-CoA starter unit with 3 malonyl-CoA units and 2 methylations. The alpha-pyrone is then combined with geranylgeranyl pyrophosphate (GGPP) formed by the GGPP synthase subD through the action of the prenyltransferase subC to yield a linear alpha-pyrone diterpenoid. Subsequent steps in the subglutinol biosynthetic pathway involve the decalin core formation, which is thought to be initiated by the epoxidation of the C10-C11 olefin by the FAD-dependent oxidoreductase subE. The following cyclization cascade would be catalyzed by the terpene cyclase subB. Lastly, the FAD-dependent dehydrogenase subF probably catalyzes the five-membered cyclic ether formation to complete the formation of subglutinol A. Subsequent redox reactions appear to give rise to subglutinol C and D, however, it remains unclear which enzymes are responsible for these transformations. SubD may have secondary function in the conversion of the identified subglutinols to subglutinol analog 45, which seems to be the major product of the cluster. The protein is Non-reducing polyketide synthase subA of Metarhizium robertsii (strain ARSEF 23 / ATCC MYA-3075) (Metarhizium anisopliae (strain ARSEF 23)).